The primary structure comprises 794 residues: Phenylalanine--tRNA ligase beta subunit (794 aa).

One can recognise a tRNA-binding domain in the interval 40–158 (NSLNSELVLG…LKKYLGKDVK (119 aa)). The region spanning 402–477 (KNKTEFEIKI…RLYSYDNIQE (76 aa)) is the B5 domain. Asp-455, Asp-461, Glu-464, and Glu-465 together coordinate Mg(2+). The region spanning 702–794 (SKFQSSSRDL…NVKKMKVVIR (93 aa)) is the FDX-ACB domain.

Belongs to the phenylalanyl-tRNA synthetase beta subunit family. Type 1 subfamily. As to quaternary structure, tetramer of two alpha and two beta subunits. It depends on Mg(2+) as a cofactor.

Its subcellular location is the cytoplasm. The catalysed reaction is tRNA(Phe) + L-phenylalanine + ATP = L-phenylalanyl-tRNA(Phe) + AMP + diphosphate + H(+). This Mycoplasma capricolum subsp. capricolum (strain California kid / ATCC 27343 / NCTC 10154) protein is Phenylalanine--tRNA ligase beta subunit.